Reading from the N-terminus, the 37-residue chain is GILSLVKGAAKLLGKGLAKEGGKVGLEFIACKVTNQC.

Cysteine 31 and cysteine 37 are joined by a disulfide.

In terms of tissue distribution, expressed by the skin glands.

Its subcellular location is the secreted. Its function is as follows. Antimicrobial peptide. This Pelophylax ridibundus (Marsh frog) protein is Esculentin-2Ra.